We begin with the raw amino-acid sequence, 424 residues long: GTPase Obg (424 aa).

One can recognise an Obg domain in the interval 1 to 158 (MFVDRAEVFV…RYISLELKIL (158 aa)). Positions 21–42 (SFRREKYVPRGGPDGGDGGKGG) are disordered. Over residues 32-42 (GPDGGDGGKGG) the composition is skewed to gly residues. Residues 159–331 (ADVGLLGFPN…LMKEAAAMLT (173 aa)) form the OBG-type G domain. GTP is bound by residues 165–172 (GFPNVGKS), 190–194 (FTTLS), 212–215 (DIPG), 282–285 (NKAD), and 312–314 (SAA). Residues S172 and T192 each coordinate Mg(2+). The 80-residue stretch at 345 to 424 (KFIPEEKRFT…LNDFEFDYIL (80 aa)) folds into the OCT domain.

The protein belongs to the TRAFAC class OBG-HflX-like GTPase superfamily. OBG GTPase family. Monomer. It depends on Mg(2+) as a cofactor.

It localises to the cytoplasm. An essential GTPase which binds GTP, GDP and possibly (p)ppGpp with moderate affinity, with high nucleotide exchange rates and a fairly low GTP hydrolysis rate. Plays a role in control of the cell cycle, stress response, ribosome biogenesis and in those bacteria that undergo differentiation, in morphogenesis control. This chain is GTPase Obg, found in Clostridium kluyveri (strain NBRC 12016).